Reading from the N-terminus, the 2180-residue chain is Genome polyprotein (2180 aa).

4 disordered regions span residues 507 to 529 (DGAD…AKDP), 624 to 679 (QPQK…YPIQ), 703 to 809 (KRAK…NTLP), and 822 to 848 (SEVE…PPKM). Residues 573-624 (SKNQGLIRVLEQQLQDLNKRICPPGTSLFHFFDQQKSEMASLKEQIRLLKEQ) are a coiled coil. 2 stretches are compositionally biased toward polar residues: residues 631–643 (DTPS…QPFH) and 670–679 (PSLFSQYPIQ). Residues 703–716 (KRAKKKLQKDEVKQ) show a composition bias toward basic and acidic residues. Over residues 759 to 771 (SEDTSSQSYISTE) the composition is skewed to polar residues. Residues 784-807 (SEESTQLSQLSSSSNDSPENNENT) are compositionally biased toward low complexity. A compositionally biased stretch (acidic residues) spans 822-832 (SEVEDEVDGMT). The segment at 1113-1126 (CFTCGKIGHFSRNC) adopts a CCHC-type zinc-finger fold. Residue Asp-1227 is the For protease activity; shared with dimeric partner of the active site. Mg(2+) contacts are provided by Asp-1480, Asp-1543, and Asp-1544. Disordered regions lie at residues 1824-1848 (RRTR…YKLS), 2115-2145 (NIVK…KNKC), and 2161-2180 (YSTK…EPCI). Residues 1828-1847 (SNSTKSKADSSQSTGSSYKL) show a composition bias toward polar residues. Over residues 2120 to 2145 (SPRKRKGKAKSKSSTRNEKRRAKNKC) the composition is skewed to basic residues. A compositionally biased stretch (polar residues) spans 2163 to 2180 (TKPSTPSWTQDSSSEPCI).

The protein belongs to the Petuviruses genome polyprotein family.

It carries out the reaction DNA(n) + a 2'-deoxyribonucleoside 5'-triphosphate = DNA(n+1) + diphosphate. Its function is as follows. Encodes presumably for at least four polypeptides: Movement protein (MP), capsid protein (CP), Protease (PR), and reverse transcriptase (RT). The chain is Genome polyprotein from Petunia (PVCV).